Reading from the N-terminus, the 96-residue chain is Large ribosomal subunit protein uL23 (96 aa).

Belongs to the universal ribosomal protein uL23 family. In terms of assembly, part of the 50S ribosomal subunit. Contacts protein L29, and trigger factor when it is bound to the ribosome.

In terms of biological role, one of the early assembly proteins it binds 23S rRNA. One of the proteins that surrounds the polypeptide exit tunnel on the outside of the ribosome. Forms the main docking site for trigger factor binding to the ribosome. This Finegoldia magna (strain ATCC 29328 / DSM 20472 / WAL 2508) (Peptostreptococcus magnus) protein is Large ribosomal subunit protein uL23.